Reading from the N-terminus, the 198-residue chain is Cyclin-dependent kinase inhibitor 1B (198 aa).

Residues 1–12 (MSNVRVSNGSPT) show a composition bias toward polar residues. The disordered stretch occupies residues 1–30 (MSNVRVSNGSPTSERRDAKQAEYPKPSACR). Serine 10 bears the Phosphoserine; by UHMK1 mark. Positions 13–22 (SERRDAKQAE) are enriched in basic and acidic residues. The interaction with CDK2 stretch occupies residues 51 to 91 (DMEEASQNKWNFDFQNHKPLEGKYEWQEVEKGSLPEFYYRP). At tyrosine 74 the chain carries Phosphotyrosine; by SRC. Residues 87 to 198 (FYYRPPRPPK…KKPGLRRRQT (112 aa)) form a disordered region. Residue tyrosine 88 is modified to Phosphotyrosine; by ABL, LYN and SRC. A Phosphotyrosine modification is found at tyrosine 89. Residues 104-113 (QESQDVSGTR) are compositionally biased toward polar residues. Residues 126–137 (EDTHLVDQKTDA) are compositionally biased toward basic and acidic residues. Residues 153 to 169 (KRPATDDSSPQNKRANR) carry the Nuclear localization signal motif. The residue at position 157 (threonine 157) is a Phosphothreonine; by CaMK1, PKB/AKT1 and PIM1. Threonine 170 bears the Phosphothreonine mark. Over residues 175–186 (SDGSPNAGSVEQ) the composition is skewed to polar residues. Position 187 is a phosphothreonine; by PKB/AKT1, CDK1 and CDK2 (threonine 187). Threonine 198 is modified (phosphothreonine; by CaMK1, PKB/AKT1, RPS6KA1, RPS6KA3 and PIM1).

This sequence belongs to the CDI family. As to quaternary structure, forms a ternary complex composed of CCNE1, CDK2 and CDKN1B. Interacts directly with CCNE1; the interaction is inhibited by CDK2-dependent phosphorylation on Thr-187. Interacts with COPS5, subunit of the COP9 signalosome complex; the interaction leads to CDKN1B degradation. Interacts with NUP50; the interaction leads to nuclear import and degradation of phosphorylated CDKN1B. Interacts with CCND1 and SNX6. Interacts (Thr-198-phosphorylated form) with 14-3-3 proteins, binds strongly YWHAQ, weakly YWHAE and YWHAH, but not YWHAB nor YWHAZ; the interaction with YWHAQ results in translocation to the cytoplasm. Interacts with AKT1 and LYN; the interactions lead to cytoplasmic mislocation, phosphorylation of CDKN1B and inhibition of cell cycle arrest. Forms a ternary complex with CCNA2 and CDK2; CDKN1B inhibits the kinase activity of CDK2 through conformational rearrangements. Interacts (unphosphorylated form) with CDK2. Forms a complex with CDK2 and SPDYA, but does not directly interact with SPDYA. Forms a ternary complex composed of cyclin D, CDK4 and CDKN1B. Interacts (phosphorylated on Tyr-88 and Tyr-89) with CDK4; the interaction is required for cyclin D and CDK4 complex assembly, induces nuclear translocation and activates the CDK4 kinase activity. Interacts with GRB2. Interacts with PIM1. Identified in a complex with SKP1, SKP2 and CKS1B. Interacts with UHMK1; the interaction leads to cytoplasmic mislocation, phosphorylation of CDKN1B and inhibition of cell cycle arrest. Also interacts with CDK1. Dephosphorylated on Thr-187 by PPM1H, leading to CDKN1B stability. In terms of processing, phosphorylated; phosphorylation occurs on serine, threonine and tyrosine residues. Phosphorylation on Ser-10 is the major site of phosphorylation in resting cells, takes place at the G(0)-G(1) phase and leads to protein stability. Phosphorylation on other sites is greatly enhanced by mitogens, growth factors, cMYC and in certain cancer cell lines. The phosphorylated form found in the cytoplasm is inactivate. Phosphorylation on Thr-198 is required for interaction with 14-3-3 proteins. Phosphorylation on Thr-187, by CDK1 and CDK2 leads to protein ubiquitination and proteasomal degradation. Tyrosine phosphorylation promotes this process. Phosphorylation by PKB/AKT1 can be suppressed by LY294002, an inhibitor of the catalytic subunit of PI3K. Phosphorylation on Tyr-88 and Tyr-89 has no effect on binding CDK2, but is required for binding CDK4. Dephosphorylated on tyrosine residues by G-CSF. Dephosphorylated on Thr-187 by PPM1H, leading to CDKN1B stability. Ubiquitinated; in the cytoplasm by the KPC complex (composed of RNF123/KPC1 and UBAC1/KPC2) and, in the nucleus, by SCF(SKP2). The latter requires prior phosphorylation on Thr-187. Ubiquitinated; by a TRIM21-containing SCF(SKP2)-like complex; leads to its degradation. Post-translationally, subject to degradation in the lysosome. Interaction with SNX6 promotes lysosomal degradation.

The protein resides in the nucleus. It localises to the cytoplasm. Its subcellular location is the endosome. In terms of biological role, important regulator of cell cycle progression. Inhibits the kinase activity of CDK2 bound to cyclin A, but has little inhibitory activity on CDK2 bound to SPDYA. Involved in G1 arrest. Potent inhibitor of cyclin E- and cyclin A-CDK2 complexes. Forms a complex with cyclin type D-CDK4 complexes and is involved in the assembly, stability, and modulation of CCND1-CDK4 complex activation. Acts either as an inhibitor or an activator of cyclin type D-CDK4 complexes depending on its phosphorylation state and/or stoichometry. The polypeptide is Cyclin-dependent kinase inhibitor 1B (CDKN1B) (Canis lupus familiaris (Dog)).